A 209-amino-acid chain; its full sequence is Na(+)-translocating NADH-quinone reductase subunit D (209 aa).

Helical transmembrane passes span 42–62 (LVMTLAVTLVTAFSSFFISLI), 70–90 (VRIIVQMVIIASLVIVVDQIL), 103–123 (VFVGLIITNCIVMGRAEAYAM), 131–151 (FMDGIGNGLGYGVVLVLVGFV), and 178–198 (NGLFLLAPSAFFIIGLLIWGL).

It belongs to the NqrDE/RnfAE family. Composed of six subunits; NqrA, NqrB, NqrC, NqrD, NqrE and NqrF.

The protein resides in the cell inner membrane. It carries out the reaction a ubiquinone + n Na(+)(in) + NADH + H(+) = a ubiquinol + n Na(+)(out) + NAD(+). Functionally, NQR complex catalyzes the reduction of ubiquinone-1 to ubiquinol by two successive reactions, coupled with the transport of Na(+) ions from the cytoplasm to the periplasm. NqrA to NqrE are probably involved in the second step, the conversion of ubisemiquinone to ubiquinol. This Yersinia enterocolitica serotype O:8 / biotype 1B (strain NCTC 13174 / 8081) protein is Na(+)-translocating NADH-quinone reductase subunit D.